We begin with the raw amino-acid sequence, 281 residues long: Protein ZAR1-like 1.S (281 aa).

A 3CxxC-type zinc finger spans residues 183-267 (QKYGFFQCKD…QDLCGRCKGQ (85 aa)).

The protein belongs to the ZAR1 family. In terms of assembly, component of a cytoplasmic ribonucleoprotein complex together with eif4enif1/4E-T and cpeb1. As to expression, expressed in oocytes.

It localises to the cytoplasm. The protein localises to the cytoplasmic ribonucleoprotein granule. MRNA-binding protein required for maternal mRNA storage, translation and degradation during oocyte maturation. Controls timing of meiosis during oogenesis. Probably promotes formation of some phase-separated membraneless compartment that stores maternal mRNAs in oocytes: acts by undergoing liquid-liquid phase separation upon binding to maternal mRNAs. Binds to the 3'-UTR of maternal mRNAs, inhibiting their translation. The protein is Protein ZAR1-like 1.S of Xenopus laevis (African clawed frog).